We begin with the raw amino-acid sequence, 96 residues long: Neutrophil defensin 8 (96 aa).

An N-terminal signal peptide occupies residues 1 to 19 (MRTLVILAAILLVALQAQA). The propeptide occupies 20–66 (EPLQARTDEATAAQEQIPTDNPEVVVSLAWDESLAPKDSVPGLRKNM). 3 disulfide bridges follow: cysteine 68–cysteine 96, cysteine 70–cysteine 85, and cysteine 75–cysteine 95.

It belongs to the alpha-defensin family.

Its subcellular location is the secreted. Its function is as follows. Probable antibiotic and antifungal activity. This chain is Neutrophil defensin 8, found in Macaca mulatta (Rhesus macaque).